A 261-amino-acid chain; its full sequence is Segregation and condensation protein A (261 aa).

The protein belongs to the ScpA family. In terms of assembly, component of a cohesin-like complex composed of ScpA, ScpB and the Smc homodimer, in which ScpA and ScpB bind to the head domain of Smc. The presence of the three proteins is required for the association of the complex with DNA.

It localises to the cytoplasm. Participates in chromosomal partition during cell division. May act via the formation of a condensin-like complex containing Smc and ScpB that pull DNA away from mid-cell into both cell halves. This chain is Segregation and condensation protein A, found in Leptospira interrogans serogroup Icterohaemorrhagiae serovar copenhageni (strain Fiocruz L1-130).